We begin with the raw amino-acid sequence, 276 residues long: ATP synthase subunit delta (276 aa).

The protein belongs to the ATPase delta chain family. In terms of assembly, F-type ATPases have 2 components, F(1) - the catalytic core - and F(0) - the membrane proton channel. F(1) has five subunits: alpha(3), beta(3), gamma(1), delta(1), epsilon(1). F(0) has three main subunits: a(1), b(2) and c(10-14). The alpha and beta chains form an alternating ring which encloses part of the gamma chain. F(1) is attached to F(0) by a central stalk formed by the gamma and epsilon chains, while a peripheral stalk is formed by the delta and b chains.

It is found in the cell membrane. In terms of biological role, f(1)F(0) ATP synthase produces ATP from ADP in the presence of a proton or sodium gradient. F-type ATPases consist of two structural domains, F(1) containing the extramembraneous catalytic core and F(0) containing the membrane proton channel, linked together by a central stalk and a peripheral stalk. During catalysis, ATP synthesis in the catalytic domain of F(1) is coupled via a rotary mechanism of the central stalk subunits to proton translocation. Its function is as follows. This protein is part of the stalk that links CF(0) to CF(1). It either transmits conformational changes from CF(0) to CF(1) or is implicated in proton conduction. The sequence is that of ATP synthase subunit delta from Frankia casuarinae (strain DSM 45818 / CECT 9043 / HFP020203 / CcI3).